A 254-amino-acid polypeptide reads, in one-letter code: Hydroxyacylglutathione hydrolase (254 aa).

Residues histidine 53, histidine 55, aspartate 57, histidine 58, histidine 111, aspartate 128, and histidine 166 each contribute to the Zn(2+) site.

The protein belongs to the metallo-beta-lactamase superfamily. Glyoxalase II family. As to quaternary structure, monomer. Zn(2+) serves as cofactor.

It carries out the reaction an S-(2-hydroxyacyl)glutathione + H2O = a 2-hydroxy carboxylate + glutathione + H(+). It functions in the pathway secondary metabolite metabolism; methylglyoxal degradation; (R)-lactate from methylglyoxal: step 2/2. In terms of biological role, thiolesterase that catalyzes the hydrolysis of S-D-lactoyl-glutathione to form glutathione and D-lactic acid. The chain is Hydroxyacylglutathione hydrolase from Aeromonas hydrophila subsp. hydrophila (strain ATCC 7966 / DSM 30187 / BCRC 13018 / CCUG 14551 / JCM 1027 / KCTC 2358 / NCIMB 9240 / NCTC 8049).